A 400-amino-acid polypeptide reads, in one-letter code: tRNA(Met) cytidine acetate ligase (400 aa).

ATP is bound by residues 7–20 (ITEY…HIYH), Gly102, Asn165, and Arg190.

Belongs to the TmcAL family.

It is found in the cytoplasm. The catalysed reaction is cytidine(34) in elongator tRNA(Met) + acetate + ATP = N(4)-acetylcytidine(34) in elongator tRNA(Met) + AMP + diphosphate. Its function is as follows. Catalyzes the formation of N(4)-acetylcytidine (ac(4)C) at the wobble position of elongator tRNA(Met), using acetate and ATP as substrates. First activates an acetate ion to form acetyladenylate (Ac-AMP) and then transfers the acetyl group to tRNA to form ac(4)C34. The polypeptide is tRNA(Met) cytidine acetate ligase (Clostridium novyi (strain NT)).